Consider the following 83-residue polypeptide: Small ribosomal subunit protein bS20 (83 aa).

Belongs to the bacterial ribosomal protein bS20 family.

Functionally, binds directly to 16S ribosomal RNA. This is Small ribosomal subunit protein bS20 from Staphylococcus aureus (strain JH1).